The primary structure comprises 177 residues: Large ribosomal subunit protein uL6 (177 aa).

The protein belongs to the universal ribosomal protein uL6 family. As to quaternary structure, part of the 50S ribosomal subunit.

Its function is as follows. This protein binds to the 23S rRNA, and is important in its secondary structure. It is located near the subunit interface in the base of the L7/L12 stalk, and near the tRNA binding site of the peptidyltransferase center. This is Large ribosomal subunit protein uL6 from Shewanella frigidimarina (strain NCIMB 400).